The primary structure comprises 250 residues: Peptidyl-tRNA hydrolase (250 aa).

Y14 contacts tRNA. H19 acts as the Proton acceptor in catalysis. F64, N66, and N112 together coordinate tRNA. Residues 192 to 250 (MGDGNQRPGGVKTDPAQLEKAPPKAQSHIRQARQNQKKPNIPESGPMAEMLKKLLGKKD) are disordered. The segment covering 219 to 229 (HIRQARQNQKK) has biased composition (polar residues). Positions 241 to 250 (MLKKLLGKKD) are enriched in basic and acidic residues.

Belongs to the PTH family. As to quaternary structure, monomer.

The protein localises to the cytoplasm. It carries out the reaction an N-acyl-L-alpha-aminoacyl-tRNA + H2O = an N-acyl-L-amino acid + a tRNA + H(+). Hydrolyzes ribosome-free peptidyl-tRNAs (with 1 or more amino acids incorporated), which drop off the ribosome during protein synthesis, or as a result of ribosome stalling. In terms of biological role, catalyzes the release of premature peptidyl moieties from peptidyl-tRNA molecules trapped in stalled 50S ribosomal subunits, and thus maintains levels of free tRNAs and 50S ribosomes. In Brucella suis (strain ATCC 23445 / NCTC 10510), this protein is Peptidyl-tRNA hydrolase.